The following is a 487-amino-acid chain: Glycogen synthase (487 aa).

Lys-15 serves as a coordination point for ADP-alpha-D-glucose.

This sequence belongs to the glycosyltransferase 1 family. Bacterial/plant glycogen synthase subfamily.

It catalyses the reaction [(1-&gt;4)-alpha-D-glucosyl](n) + ADP-alpha-D-glucose = [(1-&gt;4)-alpha-D-glucosyl](n+1) + ADP + H(+). It participates in glycan biosynthesis; glycogen biosynthesis. In terms of biological role, synthesizes alpha-1,4-glucan chains using ADP-glucose. The polypeptide is Glycogen synthase (Leptothrix cholodnii (strain ATCC 51168 / LMG 8142 / SP-6) (Leptothrix discophora (strain SP-6))).